A 92-amino-acid chain; its full sequence is Small ribosomal subunit protein uS19 (92 aa).

This sequence belongs to the universal ribosomal protein uS19 family.

In terms of biological role, protein S19 forms a complex with S13 that binds strongly to the 16S ribosomal RNA. The polypeptide is Small ribosomal subunit protein uS19 (Trichormus variabilis (strain ATCC 29413 / PCC 7937) (Anabaena variabilis)).